Reading from the N-terminus, the 218-residue chain is Adenylate kinase (218 aa).

Position 10-15 (10-15) interacts with ATP; that stretch reads GAGKGT. The NMP stretch occupies residues 30–59; the sequence is STGDMLRAAVKAGTPLGLQAKAVMDSGSLV. Residues Thr31, Arg36, 57–59, 85–88, and Gln92 contribute to the AMP site; these read SLV and GFPR. The LID stretch occupies residues 122–159; it reads GRRSHPASGRTYHVRFNPPKIDGKDDLTGEALLQREDD. Residues Arg123 and 132–133 contribute to the ATP site; that span reads TY. Arg156 and Arg167 together coordinate AMP. ATP is bound at residue Gly203.

This sequence belongs to the adenylate kinase family. Monomer.

The protein localises to the cytoplasm. The catalysed reaction is AMP + ATP = 2 ADP. It functions in the pathway purine metabolism; AMP biosynthesis via salvage pathway; AMP from ADP: step 1/1. Functionally, catalyzes the reversible transfer of the terminal phosphate group between ATP and AMP. Plays an important role in cellular energy homeostasis and in adenine nucleotide metabolism. This Verminephrobacter eiseniae (strain EF01-2) protein is Adenylate kinase.